The following is a 96-amino-acid chain: Large ribosomal subunit protein eL21 (96 aa).

The segment at 1 to 66 (MPSSNGPLEG…FDGQTGTVEG (66 aa)) is disordered.

Belongs to the eukaryotic ribosomal protein eL21 family. As to quaternary structure, part of the 50S ribosomal subunit. Interacts with protein L18 and binds the 5S rRNA. Has been cross-linked to L18.

This is one of 5 proteins that mediate the attachment of the 5S rRNA onto the large ribosomal subunit, stabilizing the orientation of adjacent RNA domains. This chain is Large ribosomal subunit protein eL21 (rpl21e), found in Haloarcula marismortui (strain ATCC 43049 / DSM 3752 / JCM 8966 / VKM B-1809) (Halobacterium marismortui).